The following is a 297-amino-acid chain: MRALRAGLTLASGAGLGAVVEGWRRRREDARAAPGLLGRLPVLPVAAAAELPPVPGGPRGPGELAKYGLPGLAQLKSRESYVLCYDPRTRGALWVVEQLRPERLRGDGDRRECDFREDDSVHAYHRATNADYRGSGFDRGHLAAAANHRWSQKAMDDTFYLSNVAPQVPHLNQNAWNNLEKYSRSLTRSYQNVYVCTGPLFLPRTEADGKSYVKYQVIGKNHVAVPTHFFKVLILEAAGGQIELRTYVMPNAPVDEAIPLERFLVPIESIERASGLLFVPNILARAGSLKAITAGSK.

The N-terminal 48 residues, 1-48 (MRALRAGLTLASGAGLGAVVEGWRRRREDARAAPGLLGRLPVLPVAAA), are a transit peptide targeting the mitochondrion. Residue threonine 128 is modified to Phosphothreonine; by GSK3-beta. Histidine 141 serves as the catalytic Proton acceptor. Asparagine 172 serves as a coordination point for Mg(2+). The tract at residues 286–296 (AGSLKAITAGS) is essential for deoxyribonuclease activity. The residue at position 288 (serine 288) is a Phosphoserine; by GSK3-beta.

This sequence belongs to the DNA/RNA non-specific endonuclease family. Homodimer; disulfide-linked. Homodimerization is essential for enzyme activity. Interacts with YWHAG. It depends on Mg(2+) as a cofactor. GSK3-beta-mediated dual phosphorylations at Thr-128 and Ser-288 is necessary for its interaction with YWHAG and the induction of autophagy.

It localises to the mitochondrion. Functionally, endonuclease that preferentially catalyzes the cleavage of double-stranded 5-hydroxymethylcytosine (5hmC)-modified DNA. The 5hmC-modified nucleotide does not increase the binding affinity, but instead increases the efficiency of cutting and specifies the site of cleavage for the modified DNAs. Shows significantly higher affinity for four-stranded Holliday junction over duplex and single-stranded DNAs. Promotes conservative recombination when the DNA is 5hmC-modified. Promotes autophagy through the suppression of mTOR by its phosphorylation-mediated interaction with YWHAG and its endonuclease activity-mediated DNA damage response. GSK3-beta mediated phosphorylation of ENDOG enhances its interaction with YWHAG, leading to the release of TSC2 and PIK3C3 from YWHAG resulting in mTOR pathway suppression and autophagy initiation. Promotes cleavage of mtDNA in response to oxidative and nitrosative stress, in turn inducing compensatory mtDNA replication. This chain is Endonuclease G, mitochondrial (ENDOG), found in Homo sapiens (Human).